The primary structure comprises 105 residues: N(4)-acetylcytidine amidohydrolase (105 aa).

The ASCH domain occupies 7–93 (TFFERFEHDI…VIAEIYPGLE (87 aa)). K21 functions as the Proton acceptor in the catalytic mechanism. Residue T24 is the Nucleophile of the active site. E74 functions as the Proton donor in the catalytic mechanism.

This sequence belongs to the N(4)-acetylcytidine amidohydrolase family.

It carries out the reaction N(4)-acetylcytidine + H2O = cytidine + acetate + H(+). The catalysed reaction is N(4)-acetyl-2'-deoxycytidine + H2O = 2'-deoxycytidine + acetate + H(+). It catalyses the reaction N(4)-acetylcytosine + H2O = cytosine + acetate + H(+). Catalyzes the hydrolysis of N(4)-acetylcytidine (ac4C). This Shewanella baltica (strain OS195) protein is N(4)-acetylcytidine amidohydrolase.